The chain runs to 120 residues: Putative B3 domain-containing protein At3g28853 (120 aa).

The segment at residues 19 to 120 (INKRLTQSDV…DKSNEVFYII (102 aa)) is a DNA-binding region (TF-B3).

Its subcellular location is the nucleus. This chain is Putative B3 domain-containing protein At3g28853, found in Arabidopsis thaliana (Mouse-ear cress).